A 147-amino-acid chain; its full sequence is Large ribosomal subunit protein uL13 (147 aa).

Belongs to the universal ribosomal protein uL13 family. In terms of assembly, part of the 50S ribosomal subunit.

This protein is one of the early assembly proteins of the 50S ribosomal subunit, although it is not seen to bind rRNA by itself. It is important during the early stages of 50S assembly. This is Large ribosomal subunit protein uL13 from Nocardia farcinica (strain IFM 10152).